The following is a 264-amino-acid chain: Thymidylate synthase (264 aa).

Arginine 21 lines the dUMP pocket. Residue histidine 51 coordinates (6R)-5,10-methylene-5,6,7,8-tetrahydrofolate. Position 126–127 (126–127) interacts with dUMP; it reads RR. Cysteine 146 (nucleophile) is an active-site residue. Residues 166–169, asparagine 177, and 207–209 each bind dUMP; these read RSAD and HLY. Aspartate 169 is a binding site for (6R)-5,10-methylene-5,6,7,8-tetrahydrofolate. Alanine 263 contacts (6R)-5,10-methylene-5,6,7,8-tetrahydrofolate.

Belongs to the thymidylate synthase family. Bacterial-type ThyA subfamily. In terms of assembly, homodimer.

It localises to the cytoplasm. The enzyme catalyses dUMP + (6R)-5,10-methylene-5,6,7,8-tetrahydrofolate = 7,8-dihydrofolate + dTMP. It participates in pyrimidine metabolism; dTTP biosynthesis. In terms of biological role, catalyzes the reductive methylation of 2'-deoxyuridine-5'-monophosphate (dUMP) to 2'-deoxythymidine-5'-monophosphate (dTMP) while utilizing 5,10-methylenetetrahydrofolate (mTHF) as the methyl donor and reductant in the reaction, yielding dihydrofolate (DHF) as a by-product. This enzymatic reaction provides an intracellular de novo source of dTMP, an essential precursor for DNA biosynthesis. The polypeptide is Thymidylate synthase (Bartonella quintana (strain Toulouse) (Rochalimaea quintana)).